Reading from the N-terminus, the 121-residue chain is T cell receptor alpha variable 23/delta variable 6 (121 aa).

A signal peptide spans 1 to 21; the sequence is MDKILGASFLVLWLQLCWVSG. The region spanning 30–121 is the Ig-like domain; it reads QQVKQSPQSL…DSATYFCAAS (92 aa). An intrachain disulfide couples Cys-51 to Cys-118. N-linked (GlcNAc...) asparagine glycosylation occurs at Asn-95.

As to quaternary structure, alpha-beta TR is a heterodimer composed of an alpha and beta chain; disulfide-linked. The alpha-beta TR is associated with the transmembrane signaling CD3 coreceptor proteins to form the TR-CD3 (TcR or TCR). The assembly of alpha-beta TR heterodimers with CD3 occurs in the endoplasmic reticulum where a single alpha-beta TR heterodimer associates with one CD3D-CD3E heterodimer, one CD3G-CD3E heterodimer and one CD247 homodimer forming a stable octameric structure. CD3D-CD3E and CD3G-CD3E heterodimers preferentially associate with TR alpha and TR beta chains, respectively. The association of the CD247 homodimer is the last step of TcR assembly in the endoplasmic reticulum and is required for transport to the cell surface.

It is found in the cell membrane. V region of the variable domain of T cell receptor (TR) alpha chain that participates in the antigen recognition. Alpha-beta T cell receptors are antigen specific receptors which are essential to the immune response and are present on the cell surface of T lymphocytes. Recognize peptide-major histocompatibility (MH) (pMH) complexes that are displayed by antigen presenting cells (APC), a prerequisite for efficient T cell adaptive immunity against pathogens. Binding of alpha-beta TR to pMH complex initiates TR-CD3 clustering on the cell surface and intracellular activation of LCK that phosphorylates the ITAM motifs of CD3G, CD3D, CD3E and CD247 enabling the recruitment of ZAP70. In turn ZAP70 phosphorylates LAT, which recruits numerous signaling molecules to form the LAT signalosome. The LAT signalosome propagates signal branching to three major signaling pathways, the calcium, the mitogen-activated protein kinase (MAPK) kinase and the nuclear factor NF-kappa-B (NF-kB) pathways, leading to the mobilization of transcription factors that are critical for gene expression and essential for T cell growth and differentiation. The T cell repertoire is generated in the thymus, by V-(D)-J rearrangement. This repertoire is then shaped by intrathymic selection events to generate a peripheral T cell pool of self-MH restricted, non-autoaggressive T cells. Post-thymic interaction of alpha-beta TR with the pMH complexes shapes TR structural and functional avidity. The sequence is that of T cell receptor alpha variable 23/delta variable 6 from Homo sapiens (Human).